A 100-amino-acid chain; its full sequence is NADH-quinone oxidoreductase subunit K (100 aa).

Helical transmembrane passes span Leu4–Met24, Ile28–Val48, and Ile60–Leu80.

Belongs to the complex I subunit 4L family. As to quaternary structure, NDH-1 is composed of 13 different subunits. Subunits NuoA, H, J, K, L, M, N constitute the membrane sector of the complex.

The protein localises to the cell membrane. It carries out the reaction a quinone + NADH + 5 H(+)(in) = a quinol + NAD(+) + 4 H(+)(out). NDH-1 shuttles electrons from NADH, via FMN and iron-sulfur (Fe-S) centers, to quinones in the respiratory chain. The immediate electron acceptor for the enzyme in this species is believed to be ubiquinone. Couples the redox reaction to proton translocation (for every two electrons transferred, four hydrogen ions are translocated across the cytoplasmic membrane), and thus conserves the redox energy in a proton gradient. The polypeptide is NADH-quinone oxidoreductase subunit K (Buchnera aphidicola subsp. Baizongia pistaciae (strain Bp)).